The sequence spans 547 residues: Chaperonin GroEL (547 aa).

ATP is bound by residues 30-33, lysine 51, 87-91, glycine 415, 479-481, and aspartate 495; these read TLGP, DGTTT, and NAA.

Belongs to the chaperonin (HSP60) family. As to quaternary structure, forms a cylinder of 14 subunits composed of two heptameric rings stacked back-to-back. Interacts with the co-chaperonin GroES.

The protein resides in the cytoplasm. It carries out the reaction ATP + H2O + a folded polypeptide = ADP + phosphate + an unfolded polypeptide.. Functionally, together with its co-chaperonin GroES, plays an essential role in assisting protein folding. The GroEL-GroES system forms a nano-cage that allows encapsulation of the non-native substrate proteins and provides a physical environment optimized to promote and accelerate protein folding. In Polynucleobacter necessarius subsp. necessarius (strain STIR1), this protein is Chaperonin GroEL.